A 113-amino-acid chain; its full sequence is Putative insulin-like growth factor 2-associated protein (113 aa).

In terms of tissue distribution, expressed in fetal and adult liver.

The polypeptide is Putative insulin-like growth factor 2-associated protein (Homo sapiens (Human)).